Consider the following 1201-residue polypeptide: MAGKVTFLGSNSSFSPDGKTQGFKSASADTSRFVSLSKPQHELDGSAQAQISRCFNKLRSLSPSDSASLKTELNLLFDELISENYSSSNHDNIPPEVVCEILVQASRLVPLSQEHLIIKLCQMIHQLLNQLQIIVDEHTLDVLVSYCSRALRTCSSWTHSEVLLALSSLVYGNGSKCQRYLPDLLGPSGVLVKYGDPKQPDIELRRSAVHCIANLCLSVPSQPYLEEPYKSVCYGILLRTLQSTKPPDVDDIVFCTLLQSALKGMQYFLNGGKWKAVPNQDLGALLAVLKRFMFYGLPGISVEMPQVLYPAPLPQYETIPAVKPEPAQDTPAQKKTAASQQKKRKSRGKGKKGAGEGKQDGEADDVSAAGGGDQSGWSHGSQSSMLTSPSVATPQLYPSWKKCSSDSEFSDPEGGMQSKLRLYQARVRQSSLQCFLAVVKCVEKRILYGYWSSFVPDAPGIGGPPPLTLLTIALKDPLPKVRAGSLQVLSALLEGSRQFLSTAEDTGAPRQAFTPFSATLAASIRELHRGLLLALIAESSCQTLTQVLKCLAHLVSNVPYNRLRPGLLSPLWKQIRPYVRHRDVNVRVSSLTLFGALVSTQAPLPEVQLLLQQPGSASSLGSGISTPQESPLSWRQPARRDEEASSPAAAEGPEGPCWLLQLCVSLVTQPREEPYSDSDAGGSNGAPLEPSPVRLEALQVLAHLVKGYFSLAQASLLELGQLSARCLTEQDPSVQLHGAKLLEELGTGIIQQYRADANTPQSAKRVPVNQVVQFWSEVLGGPLISALQNEHHPTLQTSACDTLSSILPQAFSQLPDKTQVLCITILLGLTYSENSLVKAAAVRALGVYILFPCLREDVMFVADTANAILTALDDRSPNVRAKAAWSLGNLTDTLIVNMQSVGLEFQEDFSDMLLLNMLRSATKASADKDRVKSNAVRALGNLLHFLQPGHLGKPVFEQPLLEAMRALIDTVRGDATMKVRWNACYALGNAFRNQHLPLGSAVWSTEAFSALSCVVTSCKNFKVRIKSAAALSVPATRECYGDSQQFSEVWRSLAQALEHSEETEDFLEYRYCASLRSQLCRALLHLLSLCQPDDLPALGSSVSGQSRPALQALLISHLRDEGLVPSAGADGEEALDHSTPEDGWTLLTDTLTRLKGLLGEPVMDSNEDLESVLSFLQDVVRNFEEMKEAESKESSLVLGKS.

Positions 1-25 (MAGKVTFLGSNSSFSPDGKTQGFKS) are disordered. The stretch at 182-221 (PDLLGPSGVLVKYGDPKQPDIELRRSAVHCIANLCLSVPS) is one HEAT 1 repeat. The tract at residues 321–390 (AVKPEPAQDT…SQSSMLTSPS (70 aa)) is disordered. Basic residues predominate over residues 341 to 352 (QKKRKSRGKGKK). Over residues 375-390 (SGWSHGSQSSMLTSPS) the composition is skewed to polar residues. HEAT repeat units follow at residues 460 to 498 (GIGG…GSRQ), 523 to 560 (SIRE…NVPY), and 566 to 603 (GLLS…TQAP). The segment covering 618–633 (SSLGSGISTPQESPLS) has biased composition (polar residues). The tract at residues 618-653 (SSLGSGISTPQESPLSWRQPARRDEEASSPAAAEGP) is disordered.

This chain is HEAT repeat-containing protein 6 (heatr6), found in Danio rerio (Zebrafish).